Here is a 968-residue protein sequence, read N- to C-terminus: Translation initiation factor IF-2 (968 aa).

Low complexity predominate over residues 51–76 (PAAGASKSEAPAAAPKAPASPAATRP). A disordered region spans residues 51-369 (PAAGASKSEA…GVSVPRGDGN (319 aa)). A compositionally biased stretch (pro residues) spans 77 to 87 (APAPGPAAPKA). Low complexity predominate over residues 93-102 (EAPAAASAPS). Residues 103-112 (APAPAAPAPA) are compositionally biased toward pro residues. Composition is skewed to low complexity over residues 113 to 122 (APAAAASAPS), 128 to 170 (APST…GNNP), and 239 to 254 (GARP…PGAR). Residues 281–336 (GRPGGGGRGPGRPGGAPGTGGAPGAGGGAPAGGGFGKGGRGRGGTQGAFGKGGAGR) show a composition bias toward gly residues. Basic residues predominate over residues 337–346 (GKQRKSKRAK). The tr-type G domain maps to 461–632 (ARPPVVTVMG…AVLLTADAAL (172 aa)). Positions 470–477 (GHVDHGKT) are G1. Residue 470 to 477 (GHVDHGKT) participates in GTP binding. The interval 495 to 499 (GITQH) is G2. Positions 520 to 523 (DTPG) are G3. Residues 520–524 (DTPGH) and 574–577 (NKID) contribute to the GTP site. Residues 574–577 (NKID) form a G4 region. Residues 610–612 (SAR) are G5.

Belongs to the TRAFAC class translation factor GTPase superfamily. Classic translation factor GTPase family. IF-2 subfamily.

Its subcellular location is the cytoplasm. Functionally, one of the essential components for the initiation of protein synthesis. Protects formylmethionyl-tRNA from spontaneous hydrolysis and promotes its binding to the 30S ribosomal subunits. Also involved in the hydrolysis of GTP during the formation of the 70S ribosomal complex. The sequence is that of Translation initiation factor IF-2 from Arthrobacter sp. (strain FB24).